We begin with the raw amino-acid sequence, 292 residues long: Selenate reductase subunit B (292 aa).

The segment at residues 1–43 is a signal peptide (tat-type signal); it reads MGSKETKNTSRRDFLIKGAGAAALGAGAFAISQVPLLEKLASA. 3 4Fe-4S ferredoxin-type domains span residues 84-113, 129-160, and 161-190; these read WIMV…PPGV, VTKK…KSED, and GIVA…FDWG. [4Fe-4S] cluster-binding residues include C93, C96, C99, C103, C138, C141, C146, C150, C170, C173, C176, C180, C230, C233, C245, and C249.

The complex is composed of three subunits: SrdA, SrdB and SrdC. [4Fe-4S] cluster serves as cofactor. In terms of processing, predicted to be exported by the Tat system. The position of the signal peptide cleavage has not been experimentally proven.

Its subcellular location is the secreted. It carries out the reaction selenite + a quinone + H2O = selenate + a quinol. In terms of biological role, component of the respiratory selenate reductase complex, which catalyzes the reduction of selenate to selenite. This subunit probably transfers electrons from SrdC to SrdA. The chain is Selenate reductase subunit B from Mesobacillus selenatarsenatis (strain DSM 18680 / JCM 14380 / FERM P-15431 / SF-1).